The sequence spans 350 residues: GTPase Obg (350 aa).

In terms of domain architecture, Obg spans 1 to 159 (MKLVDEAEIE…RTLKLELKLL (159 aa)). The disordered stretch occupies residues 127 to 147 (NMHFKSSTNRSPRQALPGEPG). An OBG-type G domain is found at 160–337 (ADVGLLGFPN…IMSRIMAFFD (178 aa)). GTP is bound by residues 166–173 (GFPNAGKS), 191–195 (FTTLY), 213–216 (DIPG), 287–290 (NKAD), and 318–320 (SAL). Mg(2+) contacts are provided by S173 and T193.

This sequence belongs to the TRAFAC class OBG-HflX-like GTPase superfamily. OBG GTPase family. In terms of assembly, monomer. Mg(2+) is required as a cofactor.

The protein resides in the cytoplasm. Its function is as follows. An essential GTPase which binds GTP, GDP and possibly (p)ppGpp with moderate affinity, with high nucleotide exchange rates and a fairly low GTP hydrolysis rate. Plays a role in control of the cell cycle, stress response, ribosome biogenesis and in those bacteria that undergo differentiation, in morphogenesis control. This is GTPase Obg from Stenotrophomonas maltophilia (strain R551-3).